We begin with the raw amino-acid sequence, 423 residues long: UDP-N-acetylglucosamine 1-carboxyvinyltransferase 2 (423 aa).

Phosphoenolpyruvate is bound at residue 23 to 24 (KN). Arginine 93 provides a ligand contact to UDP-N-acetyl-alpha-D-glucosamine. Cysteine 117 acts as the Proton donor in catalysis. Cysteine 117 bears the 2-(S-cysteinyl)pyruvic acid O-phosphothioketal mark. Residues 122-126 (RPIDQ), aspartate 305, and isoleucine 327 contribute to the UDP-N-acetyl-alpha-D-glucosamine site.

This sequence belongs to the EPSP synthase family. MurA subfamily.

The protein localises to the cytoplasm. It carries out the reaction phosphoenolpyruvate + UDP-N-acetyl-alpha-D-glucosamine = UDP-N-acetyl-3-O-(1-carboxyvinyl)-alpha-D-glucosamine + phosphate. It functions in the pathway cell wall biogenesis; peptidoglycan biosynthesis. Functionally, cell wall formation. Adds enolpyruvyl to UDP-N-acetylglucosamine. The sequence is that of UDP-N-acetylglucosamine 1-carboxyvinyltransferase 2 from Listeria monocytogenes serovar 1/2a (strain ATCC BAA-679 / EGD-e).